The primary structure comprises 78 residues: uncharacterized protein (78 aa).

A helical transmembrane segment spans residues 44–66 (ALYSLGFFLCTTIVIFSNIKFVV).

It belongs to the TatC family.

Its subcellular location is the plastid. The protein resides in the chloroplast membrane. This is an uncharacterized protein from Dictyota dichotoma.